The chain runs to 436 residues: 3-ketoacyl-CoA thiolase (436 aa).

Cys-99 (acyl-thioester intermediate) is an active-site residue. Residues His-392 and Cys-422 each act as proton acceptor in the active site.

This sequence belongs to the thiolase-like superfamily. Thiolase family. Heterotetramer of two alpha chains (FadJ) and two beta chains (FadI).

The protein resides in the cytoplasm. The enzyme catalyses an acyl-CoA + acetyl-CoA = a 3-oxoacyl-CoA + CoA. It functions in the pathway lipid metabolism; fatty acid beta-oxidation. Its function is as follows. Catalyzes the final step of fatty acid oxidation in which acetyl-CoA is released and the CoA ester of a fatty acid two carbons shorter is formed. This Shewanella baltica (strain OS155 / ATCC BAA-1091) protein is 3-ketoacyl-CoA thiolase.